Here is a 92-residue protein sequence, read N- to C-terminus: MAVLAGSLLGPTSRSAALLGGRWLQPRAWLGFPDAWGLPTPQQARGKARGNEYQPSNIKRKNKHGWVRRLSTPAGVQVILRRMLKGRKSLSH.

The N-terminal 46 residues, 1 to 46 (MAVLAGSLLGPTSRSAALLGGRWLQPRAWLGFPDAWGLPTPQQARG), are a transit peptide targeting the mitochondrion. S71 is subject to Phosphoserine.

It belongs to the bacterial ribosomal protein bL34 family. As to quaternary structure, component of the mitochondrial large ribosomal subunit (mt-LSU). Mature mammalian 55S mitochondrial ribosomes consist of a small (28S) and a large (39S) subunit. The 28S small subunit contains a 12S ribosomal RNA (12S mt-rRNA) and 30 different proteins. The 39S large subunit contains a 16S rRNA (16S mt-rRNA), a copy of mitochondrial valine transfer RNA (mt-tRNA(Val)), which plays an integral structural role, and 52 different proteins.

It is found in the mitochondrion. The protein is Large ribosomal subunit protein bL34m (MRPL34) of Homo sapiens (Human).